We begin with the raw amino-acid sequence, 277 residues long: Thymidylate synthase (277 aa).

DUMP-binding positions include arginine 27 and 132–133 (RR). Cysteine 152 functions as the Nucleophile in the catalytic mechanism. DUMP-binding positions include 179–182 (RSAD), asparagine 190, and 220–222 (HVY). Residue aspartate 182 participates in (6R)-5,10-methylene-5,6,7,8-tetrahydrofolate binding. Alanine 276 lines the (6R)-5,10-methylene-5,6,7,8-tetrahydrofolate pocket.

It belongs to the thymidylate synthase family. Bacterial-type ThyA subfamily. In terms of assembly, homodimer.

It localises to the cytoplasm. It catalyses the reaction dUMP + (6R)-5,10-methylene-5,6,7,8-tetrahydrofolate = 7,8-dihydrofolate + dTMP. Its pathway is pyrimidine metabolism; dTTP biosynthesis. In terms of biological role, catalyzes the reductive methylation of 2'-deoxyuridine-5'-monophosphate (dUMP) to 2'-deoxythymidine-5'-monophosphate (dTMP) while utilizing 5,10-methylenetetrahydrofolate (mTHF) as the methyl donor and reductant in the reaction, yielding dihydrofolate (DHF) as a by-product. This enzymatic reaction provides an intracellular de novo source of dTMP, an essential precursor for DNA biosynthesis. This Albidiferax ferrireducens (strain ATCC BAA-621 / DSM 15236 / T118) (Rhodoferax ferrireducens) protein is Thymidylate synthase.